Reading from the N-terminus, the 160-residue chain is Nucleotide-binding protein BP2916 (160 aa).

It belongs to the YajQ family.

In terms of biological role, nucleotide-binding protein. This Bordetella pertussis (strain Tohama I / ATCC BAA-589 / NCTC 13251) protein is Nucleotide-binding protein BP2916.